A 311-amino-acid polypeptide reads, in one-letter code: Ribosomal RNA small subunit methyltransferase H (311 aa).

S-adenosyl-L-methionine-binding positions include 39–41 (GGH), D59, F87, D102, and H109.

It belongs to the methyltransferase superfamily. RsmH family.

The protein resides in the cytoplasm. It catalyses the reaction cytidine(1402) in 16S rRNA + S-adenosyl-L-methionine = N(4)-methylcytidine(1402) in 16S rRNA + S-adenosyl-L-homocysteine + H(+). Its function is as follows. Specifically methylates the N4 position of cytidine in position 1402 (C1402) of 16S rRNA. The sequence is that of Ribosomal RNA small subunit methyltransferase H from Porphyromonas gingivalis (strain ATCC 33277 / DSM 20709 / CIP 103683 / JCM 12257 / NCTC 11834 / 2561).